We begin with the raw amino-acid sequence, 260 residues long: Carbonic anhydrase 2 (260 aa).

N-acetylserine is present on serine 2. Serine 2 is subject to Phosphoserine. Positions 3 to 259 (HHWGYGKHNG…LKGRQVKASF (257 aa)) constitute an Alpha-carbonic anhydrase domain. Catalysis depends on histidine 64, which acts as the Proton donor/acceptor. Zn(2+) is bound by residues histidine 94, histidine 96, and histidine 119. Phosphoserine occurs at positions 165 and 172. 198 to 199 (TT) is a binding site for substrate.

This sequence belongs to the alpha-carbonic anhydrase family. As to quaternary structure, interacts with SLC4A4 and SLC26A6. Interaction with SLC4A7 regulates SLC4A7 transporter activity. Zn(2+) serves as cofactor.

It is found in the cytoplasm. The protein resides in the cell membrane. The catalysed reaction is hydrogencarbonate + H(+) = CO2 + H2O. The enzyme catalyses urea = cyanamide + H2O. Inhibited by acetazolamide. Catalyzes the reversible hydration of carbon dioxide. Can also hydrate cyanamide to urea. Involved in the regulation of fluid secretion into the anterior chamber of the eye. Essential for bone resorption and osteoclast differentiation. Contributes to intracellular pH regulation in the duodenal upper villous epithelium during proton-coupled peptide absorption. Stimulates the chloride-bicarbonate exchange activity of SLC26A6. The polypeptide is Carbonic anhydrase 2 (CA2) (Oryctolagus cuniculus (Rabbit)).